Reading from the N-terminus, the 218-residue chain is Small ribosomal subunit protein uS3c (218 aa).

The region spanning 47 to 117 (VRTHIRNSSN…KLKITLSEID (71 aa)) is the KH type-2 domain.

The protein belongs to the universal ribosomal protein uS3 family. As to quaternary structure, part of the 30S ribosomal subunit.

The protein resides in the plastid. It localises to the chloroplast. This is Small ribosomal subunit protein uS3c (rps3) from Spirogyra maxima (Green alga).